A 218-amino-acid polypeptide reads, in one-letter code: Pyridoxine/pyridoxamine 5'-phosphate oxidase (218 aa).

Residues 14-17 (RREY) and Lys72 each bind substrate. Residues 67–72 (RIVLLK), 82–83 (YT), Arg88, Lys89, and Gln111 contribute to the FMN site. Positions 129, 133, and 137 each coordinate substrate. FMN is bound by residues 146–147 (QS) and Trp191. 197-199 (RLH) is a substrate binding site. Arg201 lines the FMN pocket.

This sequence belongs to the pyridoxamine 5'-phosphate oxidase family. As to quaternary structure, homodimer. FMN is required as a cofactor.

The enzyme catalyses pyridoxamine 5'-phosphate + O2 + H2O = pyridoxal 5'-phosphate + H2O2 + NH4(+). The catalysed reaction is pyridoxine 5'-phosphate + O2 = pyridoxal 5'-phosphate + H2O2. It participates in cofactor metabolism; pyridoxal 5'-phosphate salvage; pyridoxal 5'-phosphate from pyridoxamine 5'-phosphate: step 1/1. It functions in the pathway cofactor metabolism; pyridoxal 5'-phosphate salvage; pyridoxal 5'-phosphate from pyridoxine 5'-phosphate: step 1/1. Functionally, catalyzes the oxidation of either pyridoxine 5'-phosphate (PNP) or pyridoxamine 5'-phosphate (PMP) into pyridoxal 5'-phosphate (PLP). This is Pyridoxine/pyridoxamine 5'-phosphate oxidase from Escherichia fergusonii (strain ATCC 35469 / DSM 13698 / CCUG 18766 / IAM 14443 / JCM 21226 / LMG 7866 / NBRC 102419 / NCTC 12128 / CDC 0568-73).